Here is a 104-residue protein sequence, read N- to C-terminus: Ribonuclease P protein component 4 (104 aa).

Zn(2+) contacts are provided by cysteine 57, cysteine 60, cysteine 83, and cysteine 86.

The protein belongs to the eukaryotic/archaeal RNase P protein component 4 family. As to quaternary structure, consists of a catalytic RNA component and at least 4-5 protein subunits. Requires Zn(2+) as cofactor.

Its subcellular location is the cytoplasm. It catalyses the reaction Endonucleolytic cleavage of RNA, removing 5'-extranucleotides from tRNA precursor.. Its function is as follows. Part of ribonuclease P, a protein complex that generates mature tRNA molecules by cleaving their 5'-ends. The protein is Ribonuclease P protein component 4 of Saccharolobus islandicus (strain M.16.27) (Sulfolobus islandicus).